Here is a 551-residue protein sequence, read N- to C-terminus: Nose resistant to fluoxetine protein 5 (551 aa).

Residues 1–20 (MSRNFHIFFLLVSIIQVGNS) form the signal peptide. A disulfide bond links cysteine 151 and cysteine 232. Residues 241–265 (EDSEQEEGNVETTVAPTPDDDNSTL) form a disordered region.

This sequence belongs to the BPI/LBP/Plunc superfamily. BPI/LBP family. In terms of assembly, interacts with ttr-52. In terms of tissue distribution, expressed in the body wall muscle cells and detected at the basal surface of pharyngeal cells and basal-lateral membranes of the intestine.

It is found in the secreted. Its function is as follows. Plays a role in the uptake of a range of molecules including phosphatidylserine, lipids and xenobiotic compounds from the intestine to surrounding tissues. Possesses lipid transfer activity. Mediates transport of lipids from intestine to reproductive tract. Binds phosphatidylserine. Plays a role in efficient clearance of cell corpses by mediating phosphatidylserine appearance on phagocytic cells, thus promoting phagocytic engulfment of apoptotic cells. Vital for embryonic development. In Caenorhabditis elegans, this protein is Nose resistant to fluoxetine protein 5.